The following is an 80-amino-acid chain: Putative membrane protein insertion efficiency factor (80 aa).

It belongs to the UPF0161 family.

It localises to the cell membrane. Could be involved in insertion of integral membrane proteins into the membrane. This is Putative membrane protein insertion efficiency factor from Corynebacterium jeikeium (strain K411).